Consider the following 263-residue polypeptide: MSDRGSRHSLSLWFQRLVAAFFLTGQVFLHILQGRINRRNTLEQMNMVGPESMAIALITAGFVGMVFTIQVAREFIYYGATTTIGGVLSLSLTRELAPVLTAVVIAGRVGSAFAAEIGTMRVTEQLDALYMLRTDPIDYLVVPRVIACGLMLPILTGLSLFVGMAGGLVISSSLYAINPTIFLNSVQNFTQLWDVFACLFKSLVFGVIIAIIGCSWGLTTTGGAKGVGESTTTAVVTSLLAIFISNFFLSWLMFQGTGDTALG.

7 consecutive transmembrane segments (helical) span residues 12–32, 52–72, 97–117, 140–162, 167–186, 192–212, and 234–254; these read LWFQ…LHIL, SMAI…IQVA, APVL…AAEI, LVVP…SLFV, GLVI…LNSV, LWDV…IAII, and AVVT…WLMF.

The protein belongs to the MlaE permease family.

The protein localises to the cell membrane. Its function is as follows. Could be part of an ABC transporter complex. In Synechocystis sp. (strain ATCC 27184 / PCC 6803 / Kazusa), this protein is Probable ABC transporter permease protein slr1045.